Here is a 99-residue protein sequence, read N- to C-terminus: NADH-quinone oxidoreductase subunit K (99 aa).

The next 3 membrane-spanning stretches (helical) occupy residues 3–23 (PENY…GVLI), 28–48 (IIVF…FVTF), and 59–79 (VFAF…LAII).

The protein belongs to the complex I subunit 4L family. As to quaternary structure, NDH-1 is composed of 14 different subunits. Subunits NuoA, H, J, K, L, M, N constitute the membrane sector of the complex.

It is found in the cell membrane. It catalyses the reaction a quinone + NADH + 5 H(+)(in) = a quinol + NAD(+) + 4 H(+)(out). Its function is as follows. NDH-1 shuttles electrons from NADH, via FMN and iron-sulfur (Fe-S) centers, to quinones in the respiratory chain. The immediate electron acceptor for the enzyme in this species is believed to be a menaquinone. Couples the redox reaction to proton translocation (for every two electrons transferred, four hydrogen ions are translocated across the cytoplasmic membrane), and thus conserves the redox energy in a proton gradient. The sequence is that of NADH-quinone oxidoreductase subunit K from Rhodococcus jostii (strain RHA1).